A 281-amino-acid polypeptide reads, in one-letter code: Light-independent protochlorophyllide reductase iron-sulfur ATP-binding protein (281 aa).

Residues Gly10–Thr15 and Lys39 contribute to the ATP site. Ser14 serves as a coordination point for Mg(2+). [4Fe-4S] cluster is bound by residues Cys95 and Cys129. Residue Asn180 to Arg181 coordinates ATP.

The protein belongs to the NifH/BchL/ChlL family. In terms of assembly, homodimer. Protochlorophyllide reductase is composed of three subunits; ChlL, ChlN and ChlB. Requires [4Fe-4S] cluster as cofactor.

The catalysed reaction is chlorophyllide a + oxidized 2[4Fe-4S]-[ferredoxin] + 2 ADP + 2 phosphate = protochlorophyllide a + reduced 2[4Fe-4S]-[ferredoxin] + 2 ATP + 2 H2O. Its pathway is porphyrin-containing compound metabolism; chlorophyll biosynthesis (light-independent). In terms of biological role, component of the dark-operative protochlorophyllide reductase (DPOR) that uses Mg-ATP and reduced ferredoxin to reduce ring D of protochlorophyllide (Pchlide) to form chlorophyllide a (Chlide). This reaction is light-independent. The L component serves as a unique electron donor to the NB-component of the complex, and binds Mg-ATP. The protein is Light-independent protochlorophyllide reductase iron-sulfur ATP-binding protein of Thermosynechococcus vestitus (strain NIES-2133 / IAM M-273 / BP-1).